A 1060-amino-acid chain; its full sequence is RNA-binding protein 27 (1060 aa).

Basic and acidic residues-rich tracts occupy residues 91–102 (LVQEKEEIKEEV) and 124–143 (TRSE…DGKW). Disordered stretches follow at residues 91 to 143 (LVQE…DGKW) and 162 to 235 (WRRG…GAQS). Over residues 165 to 185 (GRSKSRSKSRGLSRSRSRSRG) the composition is skewed to basic residues. Positions 186–211 (RSKDRDPNRNVEHRERSKFKSERNDL) are enriched in basic and acidic residues. Positions 225 to 235 (SSEQYSSGAQS) are enriched in polar residues. A C3H1-type zinc finger spans residues 273–301 (LPPKRRCRDYDERGFCVLGDLCQFDHGND). 2 stretches are compositionally biased toward pro residues: residues 319-356 (PPPG…PGPG) and 371-384 (QPPP…PRPP). The segment at 319–412 (PPPGLPPPPP…PNLASVGTRL (94 aa)) is disordered. The segment covering 386–402 (TQSSLINSRDQPGTSAV) has biased composition (polar residues). T447 bears the Phosphothreonine mark. Omega-N-methylarginine is present on R455. Positions 565–592 (MSGLEGPLTKKPWLGKQGNNNQNKPGFL) are disordered. A compositionally biased stretch (low complexity) spans 579–588 (GKQGNNNQNK). The RRM domain maps to 600–674 (TKLEVKKIPQ…RFIRVLWHRE (75 aa)). Positions 809–886 (VQEVLKKKQE…KDELKTSSAV (78 aa)) form a coiled coil. Position 927 is a phosphoserine (S927). Disordered regions lie at residues 940–968 (PVGR…SLNH) and 1006–1060 (DRRL…SWRR). Residues S1012 and S1020 each carry the phosphoserine modification. Over residues 1024–1053 (ETEEEEVKEEETETSDLFLPDDDDEDEDEY) the composition is skewed to acidic residues.

The protein localises to the cytoplasm. It localises to the nucleus speckle. Functionally, may be involved in the turnover of nuclear polyadenylated (pA+) RNA. The polypeptide is RNA-binding protein 27 (Homo sapiens (Human)).